A 161-amino-acid polypeptide reads, in one-letter code: Transcription elongation factor GreA (161 aa).

A coiled-coil region spans residues 43–68; that stretch reads SENAEYEAAREKQAFVEARIKHLEDI.

This sequence belongs to the GreA/GreB family.

In terms of biological role, necessary for efficient RNA polymerase transcription elongation past template-encoded arresting sites. The arresting sites in DNA have the property of trapping a certain fraction of elongating RNA polymerases that pass through, resulting in locked ternary complexes. Cleavage of the nascent transcript by cleavage factors such as GreA or GreB allows the resumption of elongation from the new 3'terminus. GreA releases sequences of 2 to 3 nucleotides. The sequence is that of Transcription elongation factor GreA from Rickettsia bellii (strain OSU 85-389).